The sequence spans 253 residues: 5'-nucleotidase SurE (253 aa).

Residues Asp8, Asp9, Ser39, and Asn97 each coordinate a divalent metal cation.

The protein belongs to the SurE nucleotidase family. The cofactor is a divalent metal cation.

The protein resides in the cytoplasm. It carries out the reaction a ribonucleoside 5'-phosphate + H2O = a ribonucleoside + phosphate. Functionally, nucleotidase that shows phosphatase activity on nucleoside 5'-monophosphates. This chain is 5'-nucleotidase SurE, found in Aeromonas hydrophila subsp. hydrophila (strain ATCC 7966 / DSM 30187 / BCRC 13018 / CCUG 14551 / JCM 1027 / KCTC 2358 / NCIMB 9240 / NCTC 8049).